Here is a 451-residue protein sequence, read N- to C-terminus: Macrophage scavenger receptor types I and II (451 aa).

At methionine 1–lysine 50 the chain is on the cytoplasmic side. Serine 27 carries the phosphoserine modification. Residues alanine 51–leucine 76 traverse the membrane as a helical; Signal-anchor for type II membrane protein segment. A spacer region spans residues lysine 77–arginine 109. Residues lysine 77–leucine 451 are Extracellular-facing. Asparagine 82, asparagine 102, asparagine 143, asparagine 184, asparagine 221, asparagine 249, and asparagine 267 each carry an N-linked (GlcNAc...) asparagine glycan. Residues asparagine 171–arginine 255 are a coiled coil. Positions asparagine 267 to proline 346 are disordered. Residues glycine 273 to glycine 341 enclose the Collagen-like domain. One can recognise an SRCR domain in the interval valine 350–threonine 450. Cystine bridges form between cysteine 375–cysteine 439, cysteine 388–cysteine 449, and cysteine 419–cysteine 429.

In terms of assembly, homotrimer. Interacts with MYO18A. Isoform I, isoform II and isoform III are expressed in monocyte-derived macrophages. Isoform I and isoform II are expressed in the liver, placenta and brain.

The protein localises to the membrane. In terms of biological role, membrane glycoproteins implicated in the pathologic deposition of cholesterol in arterial walls during atherogenesis. Two types of receptor subunits exist. These receptors mediate the endocytosis of a diverse group of macromolecules, including modified low density lipoproteins (LDL). Isoform III does not internalize acetylated LDL. This is Macrophage scavenger receptor types I and II (MSR1) from Homo sapiens (Human).